The following is a 295-amino-acid chain: Nucleotide-binding protein PEPE_0450 (295 aa).

12 to 19 (GMSGAGKT) serves as a coordination point for ATP. A GTP-binding site is contributed by 62–65 (DLRS).

The protein belongs to the RapZ-like family.

Displays ATPase and GTPase activities. The protein is Nucleotide-binding protein PEPE_0450 of Pediococcus pentosaceus (strain ATCC 25745 / CCUG 21536 / LMG 10740 / 183-1w).